The chain runs to 67 residues: Cold shock protein (67 aa).

The region spanning 4-64 (GTVKWFNAEK…GAKGPQATGV (61 aa)) is the CSD domain.

It localises to the cytoplasm. This Arthrobacter globiformis protein is Cold shock protein (csp).